Here is a 397-residue protein sequence, read N- to C-terminus: Elongation factor Tu (397 aa).

The tr-type G domain maps to 10–206 (KPHVNIGTIG…AVDEAIPTPP (197 aa)). The interval 19-26 (GHIDHGKT) is G1. 19-26 (GHIDHGKT) contributes to the GTP binding site. Residue threonine 26 participates in Mg(2+) binding. The interval 62–66 (GITIS) is G2. The segment at 83-86 (DCPG) is G3. GTP contacts are provided by residues 83–87 (DCPGH) and 138–141 (NKAD). Residues 138–141 (NKAD) form a G4 region. Residues 176 to 178 (SAL) are G5.

It belongs to the TRAFAC class translation factor GTPase superfamily. Classic translation factor GTPase family. EF-Tu/EF-1A subfamily. As to quaternary structure, monomer.

The protein localises to the cytoplasm. It catalyses the reaction GTP + H2O = GDP + phosphate + H(+). Functionally, GTP hydrolase that promotes the GTP-dependent binding of aminoacyl-tRNA to the A-site of ribosomes during protein biosynthesis. This is Elongation factor Tu from Kitasatospora aureofaciens (Streptomyces aureofaciens).